The sequence spans 442 residues: Exodeoxyribonuclease 7 large subunit (442 aa).

The protein belongs to the XseA family. Heterooligomer composed of large and small subunits.

Its subcellular location is the cytoplasm. The enzyme catalyses Exonucleolytic cleavage in either 5'- to 3'- or 3'- to 5'-direction to yield nucleoside 5'-phosphates.. Its function is as follows. Bidirectionally degrades single-stranded DNA into large acid-insoluble oligonucleotides, which are then degraded further into small acid-soluble oligonucleotides. The protein is Exodeoxyribonuclease 7 large subunit of Rickettsia bellii (strain OSU 85-389).